Here is a 176-residue protein sequence, read N- to C-terminus: Protein tyrosine phosphatase PRL-1 (176 aa).

Residues 13-165 enclose the Tyrosine-protein phosphatase domain; the sequence is GESDAVVFRF…YKPRHQEGNE (153 aa). C52 and C107 are joined by a disulfide. D75 (proton donor) is an active-site residue. C107 acts as the Phosphocysteine intermediate in catalysis. 109-113 is a substrate binding site; sequence AGLGR. The residue at position 173 (C173) is a Cysteine methyl ester. C173 carries the S-farnesyl cysteine lipid modification. Residues 174–176 constitute a propeptide, removed in mature form; the sequence is AVM.

Belongs to the protein-tyrosine phosphatase family.

It is found in the flagellar pocket. It carries out the reaction O-phospho-L-tyrosyl-[protein] + H2O = L-tyrosyl-[protein] + phosphate. With respect to regulation, activated in a reduced environment which promotes the reduction of the disulfide bond between the regulatory Cys-52 and the catalytic Cys-107 residues. Inhibited by sodium orthovanadate. Its function is as follows. Has protein tyrosine phosphatase activity. The sequence is that of Protein tyrosine phosphatase PRL-1 from Trypanosoma cruzi (strain CL Brener).